The primary structure comprises 150 residues: MQLTSQAFSYGRPIPKKYSCQGVGISPPLSFSDVPREAKSLVLIVEDPDVPPSVREDGLWIHWIVYNLSPVVSNLAEGAQIFAVQGLNTAGEIGYCPPCPPDAKHRYYFYAYALDVVLSDEEGVTKEQLLEAMDGHIIATAELMGTYEKD.

The protein belongs to the UPF0098 family.

In Chlamydia trachomatis serovar D (strain ATCC VR-885 / DSM 19411 / UW-3/Cx), this protein is UPF0098 protein CT_736.